Consider the following 253-residue polypeptide: Ribonuclease 3 (253 aa).

One can recognise an RNase III domain in the interval 29 to 157; it reads VDELQKTIGH…MLGAVFLDAG (129 aa). Residue E70 coordinates Mg(2+). D74 is an active-site residue. Mg(2+)-binding residues include D143 and E146. E146 is an active-site residue. The DRBM domain occupies 184–253; the sequence is DYKSQLQELT…AARAVATLDK (70 aa).

The protein belongs to the ribonuclease III family. In terms of assembly, homodimer. Mg(2+) is required as a cofactor.

The protein resides in the cytoplasm. The enzyme catalyses Endonucleolytic cleavage to 5'-phosphomonoester.. In terms of biological role, digests double-stranded RNA. Involved in the processing of primary rRNA transcript to yield the immediate precursors to the large and small rRNAs (23S and 16S). Processes some mRNAs, and tRNAs when they are encoded in the rRNA operon. Processes pre-crRNA and tracrRNA of type II CRISPR loci if present in the organism. This is Ribonuclease 3 from Nitratidesulfovibrio vulgaris (strain ATCC 29579 / DSM 644 / CCUG 34227 / NCIMB 8303 / VKM B-1760 / Hildenborough) (Desulfovibrio vulgaris).